We begin with the raw amino-acid sequence, 26 residues long: Nicotinic acetylcholine receptor-binding protein Mnn-1A (26 aa).

Cys-3 and Cys-22 are disulfide-bonded.

The protein belongs to the three-finger toxin family. Short-chain subfamily. Expressed by the venom gland.

The protein resides in the secreted. Functionally, binds and may inhibit nicotinic acetylcholine receptors (nAChR). This chain is Nicotinic acetylcholine receptor-binding protein Mnn-1A, found in Micrurus nigrocinctus (Central American coral snake).